Here is a 400-residue protein sequence, read N- to C-terminus: EARP-interacting protein homolog (400 aa).

Residues 95-114 form a disordered region; that stretch reads NNNSNNTNNNDNTNNNTNNN. Residues 96–114 show a composition bias toward low complexity; sequence NNSNNTNNNDNTNNNTNNN. WD repeat units lie at residues 138–178, 227–267, and 271–311; these read GHTG…NEPT, AHSE…DPVK, and GHNH…SAFN. The segment covering 314–333 has biased composition (low complexity); it reads NNISNSNEQQHSQQPNEQQP. The segment at 314-348 is disordered; it reads NNISNSNEQQHSQQPNEQQPQQPPQPVKQKKNKRN. The stretch at 358–397 is one WD 4 repeat; that stretch reads EHEDSVYNISWSSSNFLFASLSYDGRFVVNNVPKEYSDIL.

Belongs to the WD repeat EIPR1 family.

This chain is EARP-interacting protein homolog, found in Dictyostelium discoideum (Social amoeba).